The chain runs to 330 residues: Ferredoxin--NADP reductase (330 aa).

The FAD site is built by E35, Q43, Y48, V90, F123, D285, and T326.

It belongs to the ferredoxin--NADP reductase type 2 family. As to quaternary structure, homodimer. FAD serves as cofactor.

It carries out the reaction 2 reduced [2Fe-2S]-[ferredoxin] + NADP(+) + H(+) = 2 oxidized [2Fe-2S]-[ferredoxin] + NADPH. The sequence is that of Ferredoxin--NADP reductase from Streptococcus pyogenes serotype M2 (strain MGAS10270).